Consider the following 341-residue polypeptide: Methionine import ATP-binding protein MetN (341 aa).

Residues 2-237 (IELCGLKKSF…PESLARKMLY (236 aa)) enclose the ABC transporter domain. Residue 34-41 (GKSGAGKS) participates in ATP binding.

This sequence belongs to the ABC transporter superfamily. Methionine importer (TC 3.A.1.24) family. In terms of assembly, the complex is composed of two ATP-binding proteins (MetN), two transmembrane proteins (MetI) and a solute-binding protein (MetQ).

It localises to the cell inner membrane. It catalyses the reaction L-methionine(out) + ATP + H2O = L-methionine(in) + ADP + phosphate + H(+). It carries out the reaction D-methionine(out) + ATP + H2O = D-methionine(in) + ADP + phosphate + H(+). Its function is as follows. Part of the ABC transporter complex MetNIQ involved in methionine import. Responsible for energy coupling to the transport system. In Legionella pneumophila (strain Paris), this protein is Methionine import ATP-binding protein MetN.